A 67-amino-acid chain; its full sequence is DNA-directed RNA polymerase subunit omega (67 aa).

It belongs to the RNA polymerase subunit omega family. As to quaternary structure, the RNAP catalytic core consists of 2 alpha, 1 beta, 1 beta' and 1 omega subunit. When a sigma factor is associated with the core the holoenzyme is formed, which can initiate transcription.

It carries out the reaction RNA(n) + a ribonucleoside 5'-triphosphate = RNA(n+1) + diphosphate. Functionally, promotes RNA polymerase assembly. Latches the N- and C-terminal regions of the beta' subunit thereby facilitating its interaction with the beta and alpha subunits. This Listeria monocytogenes serotype 4b (strain F2365) protein is DNA-directed RNA polymerase subunit omega.